The sequence spans 187 residues: Elongation factor P (187 aa).

It belongs to the elongation factor P family.

The protein localises to the cytoplasm. It functions in the pathway protein biosynthesis; polypeptide chain elongation. Its function is as follows. Involved in peptide bond synthesis. Stimulates efficient translation and peptide-bond synthesis on native or reconstituted 70S ribosomes in vitro. Probably functions indirectly by altering the affinity of the ribosome for aminoacyl-tRNA, thus increasing their reactivity as acceptors for peptidyl transferase. This chain is Elongation factor P, found in Mycobacterium leprae (strain Br4923).